The chain runs to 118 residues: Protein BEX4 (118 aa).

Residues 14–50 form a disordered region; that stretch reads VEKDKKDKKGGKASKQSEEEPHHLEEVENKKPGGNVR. Basic and acidic residues predominate over residues 28–44; it reads KQSEEEPHHLEEVENKK. The interaction with SIRT2 stretch occupies residues 30-88; that stretch reads SEEEPHHLEEVENKKPGGNVRRKVRRLVPNFLWAIPNRHVDRNEGGEDVGRFVVQGTEV. The tract at residues 30–118 is interaction with alpha-tubulin; it reads SEEEPHHLEE…DNHYDFCLIP (89 aa). Zn(2+) is bound at residue cysteine 115.

This sequence belongs to the BEX family. Interacts with alpha-tubulin. Interacts with SIRT2. Ubiquitinated and degraded by the proteasome. In terms of tissue distribution, expressed in both Sertoli and germ cells as well as interstitial area of the testis (at protein level).

The protein localises to the cytoplasm. It localises to the cytoskeleton. Its subcellular location is the spindle pole. It is found in the nucleus. May play a role in microtubule deacetylation by negatively regulating the SIRT2 deacetylase activity toward alpha-tubulin and thereby participate in the control of cell cycle progression and genomic stability. In absence of reductive stress, acts as a pseudosubstrate for the CRL2(FEM1B) complex: associates with FEM1B via zinc, thereby preventing association between FEM1B and its substrates. This is Protein BEX4 from Mus musculus (Mouse).